The chain runs to 468 residues: N-acetyltransferase SLI1 (468 aa).

The protein resides in the endoplasmic reticulum. Confers resistance to the sphingolipid biosynthesis inhibitor drug myriocin (ISP-1). Inactivates ISP-1 by converting it into N-acetyl-myriocin. Cooperates with YPK1 in mediating resistance to myriocin. The chain is N-acetyltransferase SLI1 (SLI1) from Saccharomyces cerevisiae (strain ATCC 204508 / S288c) (Baker's yeast).